A 185-amino-acid polypeptide reads, in one-letter code: Sarcoplasmic calcium-binding proteins I, III, and IV (185 aa).

4 EF-hand domains span residues 5 to 41 (FQKQ…YKEV), 57 to 92 (SLED…TIAT), 102 to 137 (WCQN…FQLQ), and 138 to 173 (CADV…TSPA). Residues Asp19, Asn21, Asp23, Ser25, Asp30, Asp70, Asn72, Asp74, Glu81, Asp115, Ser117, Asp119, and Glu126 each contribute to the Ca(2+) site.

In terms of biological role, like parvalbumins, SCPs seem to be more abundant in fast contracting muscles, but no functional relationship can be established from this distribution. In Branchiostoma lanceolatum (Common lancelet), this protein is Sarcoplasmic calcium-binding proteins I, III, and IV.